The primary structure comprises 368 residues: MRKIYNFSAGPAVLPEEVLEQAREEMLDWHGSGMSVMEMSHRGKEFMSIADETESALRELAGIPDHYKVLFLQGGASSQFAMVPMNLLGKKGKADYVNTGQWSAKAISEAKNYGSVQIAASSESDGFNSVPPLAQWHISPDAAYVHYASNETIGGVEFQWTPDLSAVAGDNKNIPLVADMSSNFLSRPFDVSKFGLIYAGAQKNVGPAGLVVVIVREDLLDIPPLAGTPAMFRYKTHADNASMYNTPPTYAIYIMGLVMEWLKKQGGLTAIEQRNIAKAKLIYDLIDVSSFYHCPVNQADRSRMNVPFTLSDPGLDDAFLKQAQAHGLIQLKGHRSVGGMRASIYNAMPLEGVQTLVTFMREFEKNHA.

Arginine 42 lines the L-glutamate pocket. Pyridoxal 5'-phosphate contacts are provided by residues alanine 76–serine 77, tryptophan 102, threonine 152, aspartate 179, and glutamine 202. Lysine 203 bears the N6-(pyridoxal phosphate)lysine mark. Asparagine 245–threonine 246 is a binding site for pyridoxal 5'-phosphate.

This sequence belongs to the class-V pyridoxal-phosphate-dependent aminotransferase family. SerC subfamily. In terms of assembly, homodimer. Pyridoxal 5'-phosphate serves as cofactor.

It is found in the cytoplasm. It catalyses the reaction O-phospho-L-serine + 2-oxoglutarate = 3-phosphooxypyruvate + L-glutamate. The enzyme catalyses 4-(phosphooxy)-L-threonine + 2-oxoglutarate = (R)-3-hydroxy-2-oxo-4-phosphooxybutanoate + L-glutamate. It functions in the pathway amino-acid biosynthesis; L-serine biosynthesis; L-serine from 3-phospho-D-glycerate: step 2/3. Its pathway is cofactor biosynthesis; pyridoxine 5'-phosphate biosynthesis; pyridoxine 5'-phosphate from D-erythrose 4-phosphate: step 3/5. In terms of biological role, catalyzes the reversible conversion of 3-phosphohydroxypyruvate to phosphoserine and of 3-hydroxy-2-oxo-4-phosphonooxybutanoate to phosphohydroxythreonine. This is Phosphoserine aminotransferase from Nitrosomonas europaea (strain ATCC 19718 / CIP 103999 / KCTC 2705 / NBRC 14298).